A 265-amino-acid polypeptide reads, in one-letter code: Tryptophan synthase alpha chain (265 aa).

Active-site proton acceptor residues include Glu-49 and Asp-60.

Belongs to the TrpA family. In terms of assembly, tetramer of two alpha and two beta chains.

It catalyses the reaction (1S,2R)-1-C-(indol-3-yl)glycerol 3-phosphate + L-serine = D-glyceraldehyde 3-phosphate + L-tryptophan + H2O. It functions in the pathway amino-acid biosynthesis; L-tryptophan biosynthesis; L-tryptophan from chorismate: step 5/5. In terms of biological role, the alpha subunit is responsible for the aldol cleavage of indoleglycerol phosphate to indole and glyceraldehyde 3-phosphate. This is Tryptophan synthase alpha chain from Polynucleobacter asymbioticus (strain DSM 18221 / CIP 109841 / QLW-P1DMWA-1) (Polynucleobacter necessarius subsp. asymbioticus).